Consider the following 223-residue polypeptide: Kynurenine formamidase (223 aa).

F34 contributes to the substrate binding site. Zn(2+)-binding residues include H64, H68, and D70. The active-site Proton donor/acceptor is the H74. H174 and E186 together coordinate Zn(2+).

The protein belongs to the Cyclase 1 superfamily. KynB family. Homodimer. It depends on Zn(2+) as a cofactor.

It carries out the reaction N-formyl-L-kynurenine + H2O = L-kynurenine + formate + H(+). Its pathway is amino-acid degradation; L-tryptophan degradation via kynurenine pathway; L-kynurenine from L-tryptophan: step 2/2. Its function is as follows. Catalyzes the hydrolysis of N-formyl-L-kynurenine to L-kynurenine, the second step in the kynurenine pathway of tryptophan degradation. The chain is Kynurenine formamidase from Polaromonas naphthalenivorans (strain CJ2).